A 232-amino-acid polypeptide reads, in one-letter code: Vesicle transport through interaction with t-SNAREs homolog 1B (232 aa).

At Ala-2 the chain carries N-acetylalanine. 2 interaction with CLINT1 regions span residues 2-23 and 69-73; these read ATSA…GLHE and APLSF. The Cytoplasmic portion of the chain corresponds to 2 to 208; the sequence is ATSAASSEHF…SRKVTTNKLL (207 aa). Positions 35–98 form a coiled coil; that stretch reads MAGTEEKKKL…AKLHREVRST (64 aa). Thr-103 bears the Phosphothreonine mark. Position 107 is an omega-N-methylarginine (Arg-107). Phosphoserine is present on Ser-138. Residues 161-198 adopt a coiled-coil conformation; that stretch reads SEIIEELGEQRDQLERTKSRLVNTSENLSKSRKILRSM. Residues 209 to 229 form a helical; Anchor for type IV membrane protein membrane-spanning segment; it reads LSIVILLELAILGGLVYYKFL. Topologically, residues 230-232 are vesicular; that stretch reads RRH.

The protein belongs to the VTI1 family. In terms of assembly, forms a SNARE complex with STX7, STX8 and VAMP8 which functions in the homotypic fusion of late endosomes. Component of the SNARE complex composed of STX7, STX8, VAMP7 and VIT1B that is required for heterotypic fusion of late endosomes with lysosomes. May interact with STX17. Interacts with CLINT1.

It localises to the early endosome membrane. It is found in the late endosome membrane. The protein resides in the lysosome membrane. Its subcellular location is the cytoplasmic granule. The protein localises to the recycling endosome membrane. Its function is as follows. V-SNARE that mediates vesicle transport pathways through interactions with t-SNAREs on the target membrane. These interactions are proposed to mediate aspects of the specificity of vesicle trafficking and to promote fusion of the lipid bilayers. May be concerned with increased secretion of cytokines associated with cellular senescence. This Bos taurus (Bovine) protein is Vesicle transport through interaction with t-SNAREs homolog 1B (VTI1B).